The primary structure comprises 445 residues: Transcriptional enhancer factor TEF-4 (445 aa).

Disordered stretches follow at residues 1 to 47 and 191 to 217; these read MGDP…VWSP and PPASDLPGYEPPPALSPLPPPAPSPPA. Gly residues predominate over residues 25–37; the sequence is EGTGGSEGVGGDG. The TEA DNA-binding region spans 38–114; the sequence is SPDAEGVWSP…QVLARRKSRE (77 aa). Residues 172 to 445 are transcriptional activation; the sequence is WNVPDVKPFS…QYHIYRLVRD (274 aa). The span at 199 to 216 shows a compositional bias: pro residues; that stretch reads YEPPPALSPLPPPAPSPP.

In terms of assembly, interacts with YAP1 and WWTR1/TAZ. As to expression, highest expression in brain. High levels also found in lung, testis and ovarian follicle cells. Lower levels in heart and spleen.

Its subcellular location is the nucleus. In terms of biological role, transcription factor which plays a key role in the Hippo signaling pathway, a pathway involved in organ size control and tumor suppression by restricting proliferation and promoting apoptosis. The core of this pathway is composed of a kinase cascade wherein MST1/MST2, in complex with its regulatory protein SAV1, phosphorylates and activates LATS1/2 in complex with its regulatory protein MOB1, which in turn phosphorylates and inactivates YAP1 oncoprotein and WWTR1/TAZ. Acts by mediating gene expression of YAP1 and WWTR1/TAZ, thereby regulating cell proliferation, migration and epithelial mesenchymal transition (EMT) induction. Binds to the SPH and GT-IIC 'enhansons' (5'-GTGGAATGT-3'). May be involved in the gene regulation of neural development. Binds to the M-CAT motif. The protein is Transcriptional enhancer factor TEF-4 (Tead2) of Mus musculus (Mouse).